Here is a 143-residue protein sequence, read N- to C-terminus: 18 kDa heat shock protein (143 aa).

One can recognise a sHSP domain in the interval Thr23–Gly135.

Belongs to the small heat shock protein (HSP20) family.

In Streptomyces albus G, this protein is 18 kDa heat shock protein (hsp18).